We begin with the raw amino-acid sequence, 228 residues long: 5'-methylthioadenosine/S-adenosylhomocysteine nucleosidase (228 aa).

E11 (proton acceptor) is an active-site residue. Residues G77, I151, and 172-173 (ME) contribute to the substrate site. The active-site Proton donor is D196.

The protein belongs to the PNP/UDP phosphorylase family. MtnN subfamily.

The catalysed reaction is S-adenosyl-L-homocysteine + H2O = S-(5-deoxy-D-ribos-5-yl)-L-homocysteine + adenine. It catalyses the reaction S-methyl-5'-thioadenosine + H2O = 5-(methylsulfanyl)-D-ribose + adenine. The enzyme catalyses 5'-deoxyadenosine + H2O = 5-deoxy-D-ribose + adenine. It functions in the pathway amino-acid biosynthesis; L-methionine biosynthesis via salvage pathway; S-methyl-5-thio-alpha-D-ribose 1-phosphate from S-methyl-5'-thioadenosine (hydrolase route): step 1/2. Catalyzes the irreversible cleavage of the glycosidic bond in both 5'-methylthioadenosine (MTA) and S-adenosylhomocysteine (SAH/AdoHcy) to adenine and the corresponding thioribose, 5'-methylthioribose and S-ribosylhomocysteine, respectively. Also cleaves 5'-deoxyadenosine, a toxic by-product of radical S-adenosylmethionine (SAM) enzymes, into 5-deoxyribose and adenine. The chain is 5'-methylthioadenosine/S-adenosylhomocysteine nucleosidase from Staphylococcus carnosus (strain TM300).